The chain runs to 945 residues: Isoleucine--tRNA ligase 1 (945 aa).

Residues 66–76 carry the 'HIGH' region motif; the sequence is PYANGDIHLGH. Glu581 is a binding site for L-isoleucyl-5'-AMP. The short motif at 622 to 626 is the 'KMSKS' region element; sequence KMSKS. Residue Lys625 participates in ATP binding. Residues Cys908, Cys911, Cys928, and Cys931 each contribute to the Zn(2+) site.

It belongs to the class-I aminoacyl-tRNA synthetase family. IleS type 1 subfamily. In terms of assembly, monomer. It depends on Zn(2+) as a cofactor.

It is found in the cytoplasm. The enzyme catalyses tRNA(Ile) + L-isoleucine + ATP = L-isoleucyl-tRNA(Ile) + AMP + diphosphate. In terms of biological role, catalyzes the attachment of isoleucine to tRNA(Ile). As IleRS can inadvertently accommodate and process structurally similar amino acids such as valine, to avoid such errors it has two additional distinct tRNA(Ile)-dependent editing activities. One activity is designated as 'pretransfer' editing and involves the hydrolysis of activated Val-AMP. The other activity is designated 'posttransfer' editing and involves deacylation of mischarged Val-tRNA(Ile). This is Isoleucine--tRNA ligase 1 from Burkholderia pseudomallei (strain K96243).